The chain runs to 100 residues: Large ribosomal subunit protein uL23 (100 aa).

Belongs to the universal ribosomal protein uL23 family. Part of the 50S ribosomal subunit. Contacts protein L29, and trigger factor when it is bound to the ribosome.

One of the early assembly proteins it binds 23S rRNA. One of the proteins that surrounds the polypeptide exit tunnel on the outside of the ribosome. Forms the main docking site for trigger factor binding to the ribosome. This Lacticaseibacillus casei (strain BL23) (Lactobacillus casei) protein is Large ribosomal subunit protein uL23.